A 271-amino-acid chain; its full sequence is MSKYRSPKTKKSIQATLQFKSTPTLVKCPKCSITYSTNSPSDLVQHKRYHDLHLNGKRWSQSWGDIINRVEALKTEKQLKYSMVSEKDKKVMSFQLPSQTLYEEDEYIVMISPKKANEVKAALDLMSIVNEELNAPHDENAFWSEVDKSGKSQGKAFIYVKKNRAVGVITIEYIENTNRGKWMVLDTKAIVPNVVPDVKLGISRIWVCRNQRQHGIATRLLEVARKKSIYGCIVNKWELAWSQPSQSGSILAKSYNAAKHRSGKLLIPCYI.

The CCHH-type zinc finger occupies 26-50 (VKCPKCSITYSTNSPSDLVQHKRYH). An N-acetyltransferase domain is found at 109–271 (VMISPKKANE…SGKLLIPCYI (163 aa)).

It belongs to the acetyltransferase family. ECO subfamily.

The protein resides in the nucleus. Its function is as follows. Probable acetyltransferase required for the establishment of sister chromatid cohesion and couple the processes of cohesion and DNA replication to ensure that only sister chromatids become paired together. In contrast to the structural cohesins, the deposition and establishment factors are required only during S phase. Acts by acetylating the cohesin complex component SMC3. This is N-acetyltransferase ECO1 (ECO1) from Kluyveromyces lactis (strain ATCC 8585 / CBS 2359 / DSM 70799 / NBRC 1267 / NRRL Y-1140 / WM37) (Yeast).